The sequence spans 240 residues: Orotidine 5'-phosphate decarboxylase (240 aa).

Substrate contacts are provided by residues D10, K33, 60-69, T123, R185, Q194, G214, and R215; that span reads DLKLHDIPNT. Residue K62 is the Proton donor of the active site.

It belongs to the OMP decarboxylase family. Type 1 subfamily. As to quaternary structure, homodimer.

It catalyses the reaction orotidine 5'-phosphate + H(+) = UMP + CO2. It functions in the pathway pyrimidine metabolism; UMP biosynthesis via de novo pathway; UMP from orotate: step 2/2. In terms of biological role, catalyzes the decarboxylation of orotidine 5'-monophosphate (OMP) to uridine 5'-monophosphate (UMP). In Lactobacillus delbrueckii subsp. bulgaricus (strain ATCC 11842 / DSM 20081 / BCRC 10696 / JCM 1002 / NBRC 13953 / NCIMB 11778 / NCTC 12712 / WDCM 00102 / Lb 14), this protein is Orotidine 5'-phosphate decarboxylase.